Here is a 648-residue protein sequence, read N- to C-terminus: Serine/threonine-protein kinase PrkC (648 aa).

Residues 1 to 330 are Cytoplasmic-facing; it reads MLIGKRISGR…KKNGKRKKWP (330 aa). Positions 11-271 constitute a Protein kinase domain; it reads YQILRVIGGG…DMEADIKTAF (261 aa). Residues 17–25 and lysine 40 contribute to the ATP site; that span reads IGGGGMANV. Aspartate 134 (proton acceptor) is an active-site residue. Phosphothreonine; by autocatalysis occurs at positions 162, 163, 165, and 167. Residue serine 214 is modified to Phosphoserine; by autocatalysis. Phosphothreonine; by autocatalysis is present on residues threonine 290, threonine 313, and threonine 320. The chain crosses the membrane as a helical span at residues 331–351; sequence WVLLTICLVFITAGILAVTVF. Residues 352–648 are Extracellular-facing; it reads PSLFMPKDVK…YKTIEYPKDE (297 aa). PASTA domains lie at 356–424, 425–492, and 493–559; these read MPKD…YKST, GKAK…TVSI, and GPED…TFSL.

Belongs to the protein kinase superfamily. Ser/Thr protein kinase family. In terms of assembly, homodimer. In terms of processing, autophosphorylation on threonine residue(s) and serine residue considerably increases the kinase activity of the protein. Dephosphorylated in vitro by PrpC.

It localises to the spore membrane. The enzyme catalyses L-seryl-[protein] + ATP = O-phospho-L-seryl-[protein] + ADP + H(+). It carries out the reaction L-threonyl-[protein] + ATP = O-phospho-L-threonyl-[protein] + ADP + H(+). Its activity is regulated as follows. Bryostatin activates PrkC activity and induces germination, whereas staurosporine inhibits PrkC and significantly reduced peptidoglycan-dependent germination. Kinase activity of isolated N-terminus stimulated by poly-L-lysine or myelin basic protein. In terms of biological role, protein kinase that is responsible for triggering spore germination in response to muropeptides, signaling bacteria to exit dormancy. PrkC is thus a germination receptor that binds peptidoglycan fragments containing m-Dpm (meso-diaminopimelate), which act as spore germinants. Autophosphorylates and phosphorylates EF-G (elongation factor G, fusA); the latter modification is likely necessary for germination in response to peptidoglycan. Another group did not detect phosphorylation of EF-G. PrkC is a substrate in vitro of the cotranscribed phosphatase PrpC, which suggests that they form a functional couple in vivo. Might also be involved in sporulation and biofilm formation. Does not seem to be involved in stress response. The polypeptide is Serine/threonine-protein kinase PrkC (prkC) (Bacillus subtilis (strain 168)).